We begin with the raw amino-acid sequence, 471 residues long: Kynurenine 3-monooxygenase (471 aa).

Residues V19, 37-40 (YESR), and A57 each bind FAD. L-kynurenine is bound by residues R85 and Y99. Residues R111, L136, T172, D304, and 317–318 (MN) contribute to the FAD site. N363 and Y398 together coordinate L-kynurenine. The next 2 helical transmembrane spans lie at 385–404 (CLHT…VTFS) and 425–445 (ALFF…TGPT).

This sequence belongs to the aromatic-ring hydroxylase family. KMO subfamily. FAD serves as cofactor.

The protein resides in the mitochondrion outer membrane. It carries out the reaction L-kynurenine + NADPH + O2 + H(+) = 3-hydroxy-L-kynurenine + NADP(+) + H2O. Its pathway is cofactor biosynthesis; NAD(+) biosynthesis; quinolinate from L-kynurenine: step 1/3. Catalyzes the hydroxylation of L-kynurenine (L-Kyn) to form 3-hydroxy-L-kynurenine (L-3OHKyn). Required for synthesis of quinolinic acid, a neurotoxic NMDA receptor antagonist and potential endogenous inhibitor of NMDA receptor signaling in axonal targeting, synaptogenesis and apoptosis during brain development. Quinolinic acid may also affect NMDA receptor signaling in pancreatic beta cells, osteoblasts, myocardial cells, and the gastrointestinal tract. This Sus scrofa (Pig) protein is Kynurenine 3-monooxygenase.